Consider the following 1368-residue polypeptide: DNA-directed RNA polymerase subunit beta (1368 aa).

The protein belongs to the RNA polymerase beta chain family. In terms of assembly, the RNAP catalytic core consists of 2 alpha, 1 beta, 1 beta' and 1 omega subunit. When a sigma factor is associated with the core the holoenzyme is formed, which can initiate transcription.

The enzyme catalyses RNA(n) + a ribonucleoside 5'-triphosphate = RNA(n+1) + diphosphate. Functionally, DNA-dependent RNA polymerase catalyzes the transcription of DNA into RNA using the four ribonucleoside triphosphates as substrates. The sequence is that of DNA-directed RNA polymerase subunit beta from Burkholderia cenocepacia (strain ATCC BAA-245 / DSM 16553 / LMG 16656 / NCTC 13227 / J2315 / CF5610) (Burkholderia cepacia (strain J2315)).